Here is an 85-residue protein sequence, read N- to C-terminus: Putative defensin-like protein 142 (85 aa).

The N-terminal stretch at 1-24 (MKKSFLFTFTVLTIFTILVIGVAP) is a signal peptide. 4 disulfide bridges follow: cysteine 30–cysteine 78, cysteine 41–cysteine 63, cysteine 46–cysteine 73, and cysteine 50–cysteine 75.

The protein belongs to the DEFL family.

Its subcellular location is the secreted. This Arabidopsis thaliana (Mouse-ear cress) protein is Putative defensin-like protein 142 (LCR34).